The chain runs to 252 residues: Bridging integrator 3 homolog (252 aa).

The region spanning 8-231 is the BAR domain; the sequence is GGPKKQIVPK…VDEVQLSDAE (224 aa). 3 coiled-coil regions span residues 17-57, 119-150, and 224-244; these read KTVE…MSKS, SLNM…KDKT, and EVQL…AELR.

It localises to the cytoplasm. Its subcellular location is the cytoskeleton. Involved in cytokinesis and septation where it has a role in the localization of F-actin. This chain is Bridging integrator 3 homolog (bin3), found in Xenopus laevis (African clawed frog).